Consider the following 189-residue polypeptide: Peptidyl-tRNA hydrolase (189 aa).

TRNA is bound at residue Tyr14. Catalysis depends on His19, which acts as the Proton acceptor. Residues Phe64, Asn66, and Asn112 each coordinate tRNA.

This sequence belongs to the PTH family. Monomer.

Its subcellular location is the cytoplasm. It carries out the reaction an N-acyl-L-alpha-aminoacyl-tRNA + H2O = an N-acyl-L-amino acid + a tRNA + H(+). Hydrolyzes ribosome-free peptidyl-tRNAs (with 1 or more amino acids incorporated), which drop off the ribosome during protein synthesis, or as a result of ribosome stalling. Functionally, catalyzes the release of premature peptidyl moieties from peptidyl-tRNA molecules trapped in stalled 50S ribosomal subunits, and thus maintains levels of free tRNAs and 50S ribosomes. The protein is Peptidyl-tRNA hydrolase of Rhizorhabdus wittichii (strain DSM 6014 / CCUG 31198 / JCM 15750 / NBRC 105917 / EY 4224 / RW1) (Sphingomonas wittichii).